The following is a 109-amino-acid chain: Large ribosomal subunit protein uL22 (109 aa).

Belongs to the universal ribosomal protein uL22 family. In terms of assembly, part of the 50S ribosomal subunit.

This protein binds specifically to 23S rRNA; its binding is stimulated by other ribosomal proteins, e.g. L4, L17, and L20. It is important during the early stages of 50S assembly. It makes multiple contacts with different domains of the 23S rRNA in the assembled 50S subunit and ribosome. Its function is as follows. The globular domain of the protein is located near the polypeptide exit tunnel on the outside of the subunit, while an extended beta-hairpin is found that lines the wall of the exit tunnel in the center of the 70S ribosome. In Blochmanniella pennsylvanica (strain BPEN), this protein is Large ribosomal subunit protein uL22.